Here is a 739-residue protein sequence, read N- to C-terminus: Phosphoribosylformylglycinamidine synthase subunit PurL (739 aa).

The active site involves His54. Positions 57 and 96 each coordinate ATP. Glu98 is a binding site for Mg(2+). Substrate contacts are provided by residues 99-102 (SHNH) and Arg121. His100 serves as the catalytic Proton acceptor. Asp122 contributes to the Mg(2+) binding site. Substrate is bound at residue Gln245. Position 273 (Asp273) interacts with Mg(2+). A substrate-binding site is contributed by 317-319 (ESQ). 2 residues coordinate ATP: Asp500 and Gly537. Asn538 lines the Mg(2+) pocket. Ser540 contacts substrate.

The protein belongs to the FGAMS family. Monomer. Part of the FGAM synthase complex composed of 1 PurL, 1 PurQ and 2 PurS subunits.

It is found in the cytoplasm. It catalyses the reaction N(2)-formyl-N(1)-(5-phospho-beta-D-ribosyl)glycinamide + L-glutamine + ATP + H2O = 2-formamido-N(1)-(5-O-phospho-beta-D-ribosyl)acetamidine + L-glutamate + ADP + phosphate + H(+). It functions in the pathway purine metabolism; IMP biosynthesis via de novo pathway; 5-amino-1-(5-phospho-D-ribosyl)imidazole from N(2)-formyl-N(1)-(5-phospho-D-ribosyl)glycinamide: step 1/2. Its function is as follows. Part of the phosphoribosylformylglycinamidine synthase complex involved in the purines biosynthetic pathway. Catalyzes the ATP-dependent conversion of formylglycinamide ribonucleotide (FGAR) and glutamine to yield formylglycinamidine ribonucleotide (FGAM) and glutamate. The FGAM synthase complex is composed of three subunits. PurQ produces an ammonia molecule by converting glutamine to glutamate. PurL transfers the ammonia molecule to FGAR to form FGAM in an ATP-dependent manner. PurS interacts with PurQ and PurL and is thought to assist in the transfer of the ammonia molecule from PurQ to PurL. This Bacillus anthracis (strain A0248) protein is Phosphoribosylformylglycinamidine synthase subunit PurL.